A 182-amino-acid chain; its full sequence is Pentatricopeptide repeat-containing protein At2g01360 (182 aa).

PPR repeat units follow at residues 30–64 (EKSA…QHSL), 65–95 (GVYH…LPDD), and 98–132 (GLSA…EIMP).

The protein belongs to the PPR family. P subfamily.

In Arabidopsis thaliana (Mouse-ear cress), this protein is Pentatricopeptide repeat-containing protein At2g01360.